The following is a 152-amino-acid chain: Deoxyuridine 5'-triphosphate nucleotidohydrolase (152 aa).

Substrate-binding positions include 71 to 73, N84, 88 to 90, and M98; these read RSG and LID.

Belongs to the dUTPase family. Mg(2+) is required as a cofactor.

It catalyses the reaction dUTP + H2O = dUMP + diphosphate + H(+). Its pathway is pyrimidine metabolism; dUMP biosynthesis; dUMP from dCTP (dUTP route): step 2/2. In terms of biological role, this enzyme is involved in nucleotide metabolism: it produces dUMP, the immediate precursor of thymidine nucleotides and it decreases the intracellular concentration of dUTP so that uracil cannot be incorporated into DNA. The protein is Deoxyuridine 5'-triphosphate nucleotidohydrolase of Erwinia tasmaniensis (strain DSM 17950 / CFBP 7177 / CIP 109463 / NCPPB 4357 / Et1/99).